The chain runs to 156 residues: Putative pre-16S rRNA nuclease (156 aa).

This sequence belongs to the YqgF nuclease family.

It localises to the cytoplasm. Functionally, could be a nuclease involved in processing of the 5'-end of pre-16S rRNA. The sequence is that of Putative pre-16S rRNA nuclease from Ehrlichia ruminantium (strain Gardel).